The sequence spans 840 residues: Phosphatidylglycerol lysyltransferase (840 aa).

The Cytoplasmic portion of the chain corresponds to methionine 1–lysine 8. A helical transmembrane segment spans residues isoleucine 9 to leucine 29. At tyrosine 30–serine 52 the chain is on the extracellular side. A helical membrane pass occupies residues leucine 53 to isoleucine 73. The Cytoplasmic portion of the chain corresponds to leucine 74 to arginine 89. The helical transmembrane segment at valine 90–glycine 110 threads the bilayer. Residues valine 111–histidine 128 lie on the Extracellular side of the membrane. A helical transmembrane segment spans residues phenylalanine 129–valine 149. The Cytoplasmic segment spans residues phenylalanine 150 to lysine 161. Residues isoleucine 162 to tyrosine 182 form a helical membrane-spanning segment. Over serine 183 to threonine 200 the chain is Extracellular. The chain crosses the membrane as a helical span at residues leucine 201–valine 221. Topologically, residues aspartate 222–serine 229 are cytoplasmic. Residues phenylalanine 230–phenylalanine 250 form a helical membrane-spanning segment. At glycine 251 to valine 271 the chain is on the extracellular side. The helical transmembrane segment at leucine 272–isoleucine 292 threads the bilayer. Residues leucine 293–serine 337 are Cytoplasmic-facing. The chain crosses the membrane as a helical span at residues leucine 338–tyrosine 358. Topologically, residues aspartate 359–tyrosine 369 are extracellular. The chain crosses the membrane as a helical span at residues tyrosine 370–isoleucine 390. At tyrosine 391–serine 394 the chain is on the cytoplasmic side. 2 consecutive transmembrane segments (helical) span residues arginine 395 to threonine 415 and tyrosine 416 to phenylalanine 436. The Cytoplasmic portion of the chain corresponds to arginine 437 to asparagine 450. Residues isoleucine 451–glycine 471 form a helical membrane-spanning segment. At threonine 472 to arginine 489 the chain is on the extracellular side. The helical transmembrane segment at tyrosine 490 to phenylalanine 510 threads the bilayer. At aspartate 511–lysine 840 the chain is on the cytoplasmic side.

It belongs to the LPG synthase family.

It is found in the cell membrane. It catalyses the reaction L-lysyl-tRNA(Lys) + a 1,2-diacyl-sn-glycero-3-phospho-(1'-sn-glycerol) = a 1,2-diacyl-sn-glycero-3-phospho-1'-(3'-O-L-lysyl)-sn-glycerol + tRNA(Lys). Catalyzes the transfer of a lysyl group from L-lysyl-tRNA(Lys) to membrane-bound phosphatidylglycerol (PG), which produces lysylphosphatidylglycerol (LPG), a major component of the bacterial membrane with a positive net charge. LPG synthesis contributes to bacterial virulence as it is involved in the resistance mechanism against cationic antimicrobial peptides (CAMP) produces by the host's immune system (defensins, cathelicidins) and by the competing microorganisms (bacteriocins). In fact, the modification of anionic phosphatidylglycerol with positively charged L-lysine results in repulsion of the peptides. The chain is Phosphatidylglycerol lysyltransferase (mprF) from Staphylococcus aureus (strain Mu50 / ATCC 700699).